Reading from the N-terminus, the 575-residue chain is Probable ferredoxin/ferredoxin--NADP reductase (575 aa).

4Fe-4S ferredoxin-type domains follow at residues 2 to 29 (PHVI…PTPD) and 37 to 66 (EMLY…PNTR). [4Fe-4S] cluster-binding residues include Cys-9, Cys-15, Cys-19, Cys-46, Cys-49, Cys-52, and Cys-56. Positions 115 to 575 (VAVVGSGPAA…GQPIVLTVPL (461 aa)) are ferredoxin--NADP reductase. Ala-123, Glu-143, Leu-151, and Ile-187 together coordinate FAD. NADP(+) contacts are provided by residues Arg-213, 258–261 (NGNV), 302–303 (RR), and Glu-314. FAD contacts are provided by residues Trp-456 and 463 to 465 (GFI). Residue Gly-463 participates in NADP(+) binding.

This sequence in the C-terminal section; belongs to the ferredoxin--NADP reductase family. Requires [4Fe-4S] cluster as cofactor. It depends on FAD as a cofactor.

It carries out the reaction 2 reduced [2Fe-2S]-[ferredoxin] + NADP(+) + H(+) = 2 oxidized [2Fe-2S]-[ferredoxin] + NADPH. This Mycobacterium bovis (strain ATCC BAA-935 / AF2122/97) protein is Probable ferredoxin/ferredoxin--NADP reductase (fprB).